Consider the following 1066-residue polypeptide: Vinculin (1066 aa).

Residues M1–F835 form an N-terminal globular head region. S97 is modified (phosphoserine). The talin-interaction stretch occupies residues M168–A208. Position 173 is an N6-acetyllysine (K173). Tandem repeats lie at residues A259–N369, A370–R479, and A480–E589. The interval A259–E589 is 3 X 112 AA tandem repeats. Phosphoserine occurs at positions 260, 272, 275, 290, 346, and 434. K496 is subject to N6-acetyllysine. At Y537 the chain carries Phosphotyrosine. Residues S574, S579, and S600 each carry the phosphoserine modification. A phosphothreonine mark is found at T604 and T672. A Phosphoserine modification is found at S721. Residues M741–L764 form an interaction with ACTN4 region. A phosphoserine mark is found at S795 and S809. A Phosphotyrosine modification is found at Y822. The interval Q836–P878 is linker (Pro-rich). The disordered stretch occupies residues E857–E887. Over residues P860–P876 the composition is skewed to pro residues. A C-terminal tail region spans residues E879–Q1066. Facilitates phospholipid membrane insertion regions lie at residues R935 to R978 and A1052 to Q1066. Y1065 carries the post-translational modification Phosphotyrosine; by SRC-type Tyr-kinases.

Belongs to the vinculin/alpha-catenin family. As to quaternary structure, exhibits self-association properties. Part of a complex composed of THSD1, PTK2/FAK1, TLN1 and VCL. Interacts with APBB1IP, NRAP and TLN1. Interacts with SYNM. Interacts with CTNNB1 and this interaction is necessary for its localization to the cell-cell junctions and for its function in regulating cell surface expression of E-cadherin. Interacts with SORBS1. Interacts with SYNM. Interacts with CTNNA1. Binds to ACTN4; this interaction triggers conformational changes. Interacts with FLII. Phosphorylated; on serines, threonines and tyrosines. Phosphorylation on Tyr-1065 in activated platelets affects head-tail interactions and cell spreading but has no effect on actin binding nor on localization to focal adhesion plaques. In terms of processing, acetylated; mainly by myristic acid but also by a small amount of palmitic acid.

Its subcellular location is the cell membrane. The protein resides in the cell junction. It is found in the adherens junction. It localises to the focal adhesion. The protein localises to the cytoplasm. Its subcellular location is the cytoskeleton. The protein resides in the sarcolemma. It is found in the cell projection. It localises to the podosome. Functionally, actin filament (F-actin)-binding protein involved in cell-matrix adhesion and cell-cell adhesion. Regulates cell-surface E-cadherin expression and potentiates mechanosensing by the E-cadherin complex. May also play important roles in cell morphology and locomotion. The chain is Vinculin (Vcl) from Mus musculus (Mouse).